The sequence spans 309 residues: RING finger protein mug145 (309 aa).

Residues 23–43 (ILLFALVIILSVIFINFFFFY) form a helical membrane-spanning segment. Residues 205–247 (CIICYADYAFDDILRVLPCEHVFHTQCIDTWMTTMKASCPLCN) form an RING-type; atypical zinc finger.

Its subcellular location is the membrane. Functionally, has a role in meiosis. The polypeptide is RING finger protein mug145 (mug145) (Schizosaccharomyces pombe (strain 972 / ATCC 24843) (Fission yeast)).